Consider the following 254-residue polypeptide: Glutamate racemase (254 aa).

Substrate contacts are provided by residues 7-8 and 39-40; these read DS and YG. Cysteine 70 (proton donor/acceptor) is an active-site residue. 71–72 is a binding site for substrate; sequence NT. The Proton donor/acceptor role is filled by cysteine 178. A substrate-binding site is contributed by 179 to 180; it reads TH.

It belongs to the aspartate/glutamate racemases family.

It carries out the reaction L-glutamate = D-glutamate. Its pathway is cell wall biogenesis; peptidoglycan biosynthesis. Functionally, provides the (R)-glutamate required for cell wall biosynthesis. The polypeptide is Glutamate racemase (Aquifex aeolicus (strain VF5)).